A 747-amino-acid chain; its full sequence is DNA damage checkpoint protein LCD1 (747 aa).

Phosphoserine is present on residues Ser-10, Ser-11, and Ser-76. The stretch at 62-139 (NQLVNQLNKA…MEARGKSKRE (78 aa)) forms a coiled coil. The tract at residues 145-180 (KPPSTTLSTNTNTITPDSSSVAIEAKPQSPQSKKRK) is disordered. A compositionally biased stretch (low complexity) spans 146–160 (PPSTTLSTNTNTITP).

In terms of assembly, forms a complex with MEC1. In terms of processing, phosphorylated by MEC1 in a cell cycle dependent manner and in response to DNA damage.

It localises to the cytoplasm. It is found in the nucleus. In terms of biological role, forms a complex with the serine/threonine kinase MEC1 which activates checkpoint signaling upon genotoxic stresses. The MEC1-LCD1 complex is recruited by the single-strand-binding protein complex RPA to DNA lesions in order to initiate the DNA repair by homologous recombination, after the MRX-complex and TEL1 are displaced. Required for the recruitment of MEC1 to DNA lesions, the activation of CHK1 and RAD53 kinases and phosphorylation of RAD9 in response to DNA damage. Required for cell growth and meiotic recombination. This is DNA damage checkpoint protein LCD1 (LCD1) from Saccharomyces cerevisiae (strain ATCC 204508 / S288c) (Baker's yeast).